Reading from the N-terminus, the 471-residue chain is ATP synthase subunit beta (471 aa).

Residue 159-166 (GGAGVGKT) participates in ATP binding.

It belongs to the ATPase alpha/beta chains family. F-type ATPases have 2 components, CF(1) - the catalytic core - and CF(0) - the membrane proton channel. CF(1) has five subunits: alpha(3), beta(3), gamma(1), delta(1), epsilon(1). CF(0) has four main subunits: a(1), b(1), b'(1) and c(9-12).

Its subcellular location is the cell membrane. It carries out the reaction ATP + H2O + 4 H(+)(in) = ADP + phosphate + 5 H(+)(out). Its function is as follows. Produces ATP from ADP in the presence of a proton gradient across the membrane. The catalytic sites are hosted primarily by the beta subunits. The sequence is that of ATP synthase subunit beta from Heliobacterium modesticaldum (strain ATCC 51547 / Ice1).